A 302-amino-acid chain; its full sequence is Uroporphyrinogen-III synthase, chloroplastic (302 aa).

Residues methionine 1–isoleucine 39 are disordered. The N-terminal 50 residues, methionine 1–valine 50, are a transit peptide targeting the chloroplast.

The protein belongs to the uroporphyrinogen-III synthase family.

The protein resides in the plastid. The protein localises to the chloroplast. It carries out the reaction hydroxymethylbilane = uroporphyrinogen III + H2O. It functions in the pathway porphyrin-containing compound metabolism; protoporphyrin-IX biosynthesis; coproporphyrinogen-III from 5-aminolevulinate: step 3/4. Functionally, catalyzes cyclization of the linear tetrapyrrole, hydroxymethylbilane, to the macrocyclic uroporphyrinogen III, a precursor of tetrapyrroles such as chlorophyll, heme and phycobilins. This is Uroporphyrinogen-III synthase, chloroplastic (UROS) from Oryza sativa subsp. japonica (Rice).